A 141-amino-acid chain; its full sequence is UPF0179 protein Cmaq_1008 (141 aa).

It belongs to the UPF0179 family.

The sequence is that of UPF0179 protein Cmaq_1008 from Caldivirga maquilingensis (strain ATCC 700844 / DSM 13496 / JCM 10307 / IC-167).